Reading from the N-terminus, the 432-residue chain is Peptidase B (432 aa).

Residues Lys196 and Asp201 each contribute to the Mn(2+) site. Residue Lys208 is part of the active site. Asp219, Asp278, and Glu280 together coordinate Mn(2+). Residue Arg282 is part of the active site.

The protein belongs to the peptidase M17 family. Homohexamer. The cofactor is Mn(2+).

It is found in the cytoplasm. The catalysed reaction is Release of an N-terminal amino acid, Xaa, from a peptide or arylamide. Xaa is preferably Glu or Asp but may be other amino acids, including Leu, Met, His, Cys and Gln.. Its function is as follows. Probably plays an important role in intracellular peptide degradation. This chain is Peptidase B, found in Vibrio parahaemolyticus serotype O3:K6 (strain RIMD 2210633).